The following is a 435-amino-acid chain: Membrane-bound ghrelin O-acyltransferase MBOAT4 (435 aa).

The Lumenal segment spans residues 1-5; the sequence is MDWLQ. The helical transmembrane segment at 6-26 threads the bilayer; it reads FFFLHPVSLYQGAAFPFALLF. The Cytoplasmic segment spans residues 27–40; it reads NYLCITESFPTRAR. A helical transmembrane segment spans residues 41-56; sequence YLFLLAGGGVLALAAM. Residues 57-59 lie on the Lumenal side of the membrane; sequence GPY. The helical transmembrane segment at 60 to 76 threads the bilayer; it reads ALLIFIPALCAVAMISS. Over 77 to 82 the chain is Cytoplasmic; sequence LSPQEV. A helical transmembrane segment spans residues 83-101; it reads HGLTFFFQMGWQTLCHLGL. At 102–120 the chain is on the lumenal side; sequence HYKEYYLCEPPPVRFYITL. Residues 121–136 form a helical membrane-spanning segment; sequence SSLMLLTQRVTSLSLD. At 137–206 the chain is on the cytoplasmic side; sequence ISEGKVEAAW…YPSISFWALT (70 aa). A helical transmembrane segment spans residues 207 to 227; that stretch reads WRGLQILGLECLKVALRRVVS. At 228–240 the chain is on the lumenal side; that stretch reads AGAGLDDCQRLEC. Residues 241–261 form a helical membrane-spanning segment; it reads IYIMWSTAGLFKLTYYSHWIL. At 262 to 324 the chain is on the cytoplasmic side; the sequence is DDSLLHAAGF…KRLVFQRSRR (63 aa). Catalysis depends on residues Asn307 and His338. The chain crosses the membrane as a helical span at residues 325–338; sequence WPVLQTFAFSAWWH. Residues 339–340 are Lumenal-facing; sequence GL. The chain crosses the membrane as a helical span at residues 341 to 357; that stretch reads HPGQVFGFLCWSVMVKA. Topologically, residues 358 to 376 are cytoplasmic; it reads DYLIHTFANGCIRSWPLRL. Residues 377-397 traverse the membrane as a helical segment; it reads LYRSLTWAHTQIIIAYVMLAV. The Lumenal portion of the chain corresponds to 398 to 407; it reads EGRSFSSLCR. A helical membrane pass occupies residues 408–428; that stretch reads LCCSYNSIFPVTYCLLLFLLA. The Cytoplasmic portion of the chain corresponds to 429 to 435; the sequence is RRKHKCN.

Belongs to the membrane-bound acyltransferase family. Monomer. In terms of processing, not glycosylated.

It localises to the endoplasmic reticulum membrane. It carries out the reaction octanoyl-CoA + L-seryl-[protein] = O-octanoyl-L-seryl-[protein] + CoA. The catalysed reaction is decanoyl-CoA + L-seryl-[protein] = O-decanoyl-L-seryl-[protein] + CoA. It catalyses the reaction L-seryl-[protein] + acetyl-CoA = O-acetyl-L-seryl-[protein] + CoA. The enzyme catalyses L-seryl-[protein] + butanoyl-CoA = O-butanoyl-L-seryl-[protein] + CoA. It carries out the reaction pentanoyl-CoA + L-seryl-[protein] = O-pentanoyl-L-seryl-[protein] + CoA. The catalysed reaction is hexanoyl-CoA + L-seryl-[protein] = O-hexanoyl-L-seryl-[protein] + CoA. It catalyses the reaction heptanoyl-CoA + L-seryl-[protein] = O-heptanoyl-L-seryl-[protein] + CoA. The enzyme catalyses nonanoyl-CoA + L-seryl-[protein] = O-nonanoyl-L-seryl-[protein] + CoA. It carries out the reaction L-seryl-[protein] + dodecanoyl-CoA = O-dodecanoyl-L-seryl-[protein] + CoA. The catalysed reaction is L-seryl-[protein] + tetradecanoyl-CoA = O-tetradecanoyl-L-seryl-[protein] + CoA. It catalyses the reaction a fatty acyl-CoA + L-seryl-[protein] = O-fatty acyl-L-seryl-[protein] + CoA. Catalyzes ghrelin acylation at 'Ser-3' using preferentially octanoyl-CoA, hexanoyl-CoA and decanoyl-CoA as acyl-CoA donors leading to ghrelin activity. In vitro uses also acyl-CoA donors of different lengths from short-chain (C2) to long-chain fatty acids (C16) knowing that acyl-CoA donors from butanoyl-CoA (C4) to dodecanoyl-CoA (C12) are more efficient compared to longer acyl-CoA donors, such as myristoyl-CoA (C14) and palmitoyl-CoA (C16) that are not efficient. The sequence is that of Membrane-bound ghrelin O-acyltransferase MBOAT4 from Rattus norvegicus (Rat).